Consider the following 331-residue polypeptide: Protein-methionine-sulfoxide reductase catalytic subunit MsrP (331 aa).

Residues 1–57 constitute a signal peptide (tat-type signal); that stretch reads MLIKKTLRAALAGDDIPRSEITPRAVFEHRRRILQAAGAAAAGGLVGAHGLALAAYA. Mo-molybdopterin is bound by residues Asn90, 93–94, Cys148, Thr183, Asn231, Arg236, and 247–249; these read YE and SAK.

It belongs to the MsrP family. In terms of assembly, heterodimer of a catalytic subunit (MsrP) and a heme-binding subunit (MsrQ). The cofactor is Mo-molybdopterin. Post-translationally, predicted to be exported by the Tat system. The position of the signal peptide cleavage has not been experimentally proven.

The protein localises to the periplasm. The enzyme catalyses L-methionyl-[protein] + a quinone + H2O = L-methionyl-(S)-S-oxide-[protein] + a quinol. It carries out the reaction L-methionyl-[protein] + a quinone + H2O = L-methionyl-(R)-S-oxide-[protein] + a quinol. In terms of biological role, part of the MsrPQ system that repairs oxidized periplasmic proteins containing methionine sulfoxide residues (Met-O), using respiratory chain electrons. Thus protects these proteins from oxidative-stress damage caused by reactive species of oxygen and chlorine generated by the host defense mechanisms. MsrPQ is essential for the maintenance of envelope integrity under bleach stress, rescuing a wide series of structurally unrelated periplasmic proteins from methionine oxidation. The catalytic subunit MsrP is non-stereospecific, being able to reduce both (R-) and (S-) diastereoisomers of methionine sulfoxide. The chain is Protein-methionine-sulfoxide reductase catalytic subunit MsrP from Burkholderia mallei (strain ATCC 23344).